A 456-amino-acid polypeptide reads, in one-letter code: RuvB-like helicase 1 (456 aa).

Residue 71-78 (GGAGTGKT) coordinates ATP.

The protein belongs to the RuvB family. In terms of assembly, may form heterododecamers with RVB2. Component of the SWR1 chromatin remodeling complex, the INO80 chromatin remodeling complex, and of the R2TP complex.

The protein localises to the nucleus. It catalyses the reaction ATP + H2O = ADP + phosphate + H(+). Its function is as follows. DNA helicase which participates in several chromatin remodeling complexes, including the SWR1 and the INO80 complexes. The SWR1 complex mediates the ATP-dependent exchange of histone H2A for the H2A variant HZT1 leading to transcriptional regulation of selected genes by chromatin remodeling. The INO80 complex remodels chromatin by shifting nucleosomes and is involved in DNA repair. Also involved in pre-rRNA processing. The protein is RuvB-like helicase 1 (rvb1) of Schizosaccharomyces pombe (strain 972 / ATCC 24843) (Fission yeast).